Reading from the N-terminus, the 207-residue chain is ATP synthase subunit b 2 (207 aa).

Residues 53-72 traverse the membrane as a helical segment; it reads TYASQLLWLVITFSVFYLLM.

This sequence belongs to the ATPase B chain family. As to quaternary structure, F-type ATPases have 2 components, F(1) - the catalytic core - and F(0) - the membrane proton channel. F(1) has five subunits: alpha(3), beta(3), gamma(1), delta(1), epsilon(1). F(0) has three main subunits: a(1), b(2) and c(10-14). The alpha and beta chains form an alternating ring which encloses part of the gamma chain. F(1) is attached to F(0) by a central stalk formed by the gamma and epsilon chains, while a peripheral stalk is formed by the delta and b chains.

The protein resides in the cell inner membrane. In terms of biological role, f(1)F(0) ATP synthase produces ATP from ADP in the presence of a proton or sodium gradient. F-type ATPases consist of two structural domains, F(1) containing the extramembraneous catalytic core and F(0) containing the membrane proton channel, linked together by a central stalk and a peripheral stalk. During catalysis, ATP synthesis in the catalytic domain of F(1) is coupled via a rotary mechanism of the central stalk subunits to proton translocation. Component of the F(0) channel, it forms part of the peripheral stalk, linking F(1) to F(0). The b'-subunit is a diverged and duplicated form of b found in plants and photosynthetic bacteria. The chain is ATP synthase subunit b 2 (atpF2) from Rhizobium etli (strain CIAT 652).